We begin with the raw amino-acid sequence, 317 residues long: Malate dehydrogenase (317 aa).

Residues 10-15 (GGGQIG) and Asp34 each bind NAD(+). Residues Arg83 and Arg89 each coordinate substrate. NAD(+) is bound by residues Asn96 and 119–121 (ISN). Positions 121 and 152 each coordinate substrate. The active-site Proton acceptor is the His176.

The protein belongs to the LDH/MDH superfamily. MDH type 3 family.

The enzyme catalyses (S)-malate + NAD(+) = oxaloacetate + NADH + H(+). Functionally, catalyzes the reversible oxidation of malate to oxaloacetate. The sequence is that of Malate dehydrogenase from Citrifermentans bemidjiense (strain ATCC BAA-1014 / DSM 16622 / JCM 12645 / Bem) (Geobacter bemidjiensis).